Consider the following 178-residue polypeptide: Crossover junction endodeoxyribonuclease RuvC (178 aa).

Residues Asp7, Glu68, and Asp141 contribute to the active site. 3 residues coordinate Mg(2+): Asp7, Glu68, and Asp141.

The protein belongs to the RuvC family. As to quaternary structure, homodimer which binds Holliday junction (HJ) DNA. The HJ becomes 2-fold symmetrical on binding to RuvC with unstacked arms; it has a different conformation from HJ DNA in complex with RuvA. In the full resolvosome a probable DNA-RuvA(4)-RuvB(12)-RuvC(2) complex forms which resolves the HJ. It depends on Mg(2+) as a cofactor.

It is found in the cytoplasm. It catalyses the reaction Endonucleolytic cleavage at a junction such as a reciprocal single-stranded crossover between two homologous DNA duplexes (Holliday junction).. Its function is as follows. The RuvA-RuvB-RuvC complex processes Holliday junction (HJ) DNA during genetic recombination and DNA repair. Endonuclease that resolves HJ intermediates. Cleaves cruciform DNA by making single-stranded nicks across the HJ at symmetrical positions within the homologous arms, yielding a 5'-phosphate and a 3'-hydroxyl group; requires a central core of homology in the junction. The consensus cleavage sequence is 5'-(A/T)TT(C/G)-3'. Cleavage occurs on the 3'-side of the TT dinucleotide at the point of strand exchange. HJ branch migration catalyzed by RuvA-RuvB allows RuvC to scan DNA until it finds its consensus sequence, where it cleaves and resolves the cruciform DNA. This Parafrankia sp. (strain EAN1pec) protein is Crossover junction endodeoxyribonuclease RuvC.